The sequence spans 441 residues: ATP-dependent protease ATPase subunit HslU (441 aa).

Residues Ile17, Gly60–Glu65, Asp253, Glu319, and Arg391 each bind ATP.

This sequence belongs to the ClpX chaperone family. HslU subfamily. As to quaternary structure, a double ring-shaped homohexamer of HslV is capped on each side by a ring-shaped HslU homohexamer. The assembly of the HslU/HslV complex is dependent on binding of ATP.

The protein resides in the cytoplasm. Functionally, ATPase subunit of a proteasome-like degradation complex; this subunit has chaperone activity. The binding of ATP and its subsequent hydrolysis by HslU are essential for unfolding of protein substrates subsequently hydrolyzed by HslV. HslU recognizes the N-terminal part of its protein substrates and unfolds these before they are guided to HslV for hydrolysis. The protein is ATP-dependent protease ATPase subunit HslU of Legionella pneumophila (strain Paris).